The following is a 113-amino-acid chain: UPF0251 protein TK0562 (113 aa).

It belongs to the UPF0251 family.

This is UPF0251 protein TK0562 from Thermococcus kodakarensis (strain ATCC BAA-918 / JCM 12380 / KOD1) (Pyrococcus kodakaraensis (strain KOD1)).